The sequence spans 319 residues: Cell surface A33 antigen (319 aa).

The signal sequence occupies residues 1 to 21 (MLGKAGSVVWMLCAIWVAADA). The 113-residue stretch at 22 to 134 (LTVETTQDIL…QDVNAKSRVR (113 aa)) folds into the Ig-like V-type domain. Over 22–235 (LTVETTQDIL…VAPRPPSMNI (214 aa)) the chain is Extracellular. Cystine bridges form between cysteine 43/cysteine 117, cysteine 146/cysteine 222, and cysteine 162/cysteine 211. N-linked (GlcNAc...) asparagine glycosylation is found at asparagine 99, asparagine 112, asparagine 200, and asparagine 223. In terms of domain architecture, Ig-like C2-type spans 140 to 227 (PPSKPDCSIQ…GIESCNITVA (88 aa)). A helical transmembrane segment spans residues 236–256 (ALYAGIAGGVFVALIIIGVIV). The Cytoplasmic portion of the chain corresponds to 257–319 (YCCCCREKDD…GRSTPDQPFQ (63 aa)). Basic and acidic residues-rich tracts occupy residues 267 to 276 (KDQDREDARP) and 284 to 308 (PKKE…DRWS). Residues 267–319 (KDQDREDARPNRAAYQVPKKEQKEISRGREDEDDHRHEDRWSSGRSTPDQPFQ) form a disordered region. Positions 309 to 319 (SGRSTPDQPFQ) are enriched in polar residues.

In terms of processing, palmitoylated.

It is found in the membrane. In terms of biological role, may play a role in cell-cell recognition and signaling. The sequence is that of Cell surface A33 antigen (Gpa33) from Mus musculus (Mouse).